Consider the following 140-residue polypeptide: Large-conductance mechanosensitive channel 2 (140 aa).

The next 3 membrane-spanning stretches (helical) occupy residues 8–28, 30–50, and 81–101; these read FISKGNVMDLAVGVIIGAAFG, IVDSLVNDIIMPVIGAIFGGL, and GSFITVALNFVILAFIIFLMV.

The protein belongs to the MscL family. In terms of assembly, homopentamer.

It localises to the cell inner membrane. Its function is as follows. Channel that opens in response to stretch forces in the membrane lipid bilayer. May participate in the regulation of osmotic pressure changes within the cell. The protein is Large-conductance mechanosensitive channel 2 of Mesorhizobium japonicum (strain LMG 29417 / CECT 9101 / MAFF 303099) (Mesorhizobium loti (strain MAFF 303099)).